Here is a 190-residue protein sequence, read N- to C-terminus: Dynein axonemal light chain 1 (190 aa).

An N-acetylalanine modification is found at Ala2. 4 LRR repeats span residues 47–69, 70–93, 95–114, and 115–138; these read LANC…LNGL, KNLR…AVGD, LEEL…IHVM, and RKLK…KLAE. Ser56 bears the Phosphoserine mark.

The protein belongs to the dynein light chain LC1-type family. In terms of assembly, interacts with ZMYND10 (via C-terminus). Interacts with DNAH5, a outer arm dynein heavy chain. Interacts with tubulin located within the A-tubule of the outer doublets in a ATP-independent manner.

The protein resides in the cytoplasm. The protein localises to the cytoskeleton. Its subcellular location is the cilium axoneme. Functionally, part of the multisubunit axonemal ATPase complexes that generate the force for cilia motility and govern beat frequency. Component of the outer arm dynein (ODA). May be involved in a mechanosensory feedback mechanism controlling ODA activity based on external conformational cues by tethering the outer arm dynein heavy chain (DNAH5) to the microtubule within the axoneme. Important for ciliary function in the airways and for the function of the cilia that produce the nodal flow essential for the determination of the left-right asymmetry. This Rattus norvegicus (Rat) protein is Dynein axonemal light chain 1.